A 340-amino-acid polypeptide reads, in one-letter code: UDP-3-O-acylglucosamine N-acyltransferase (340 aa).

The active-site Proton acceptor is the H247.

This sequence belongs to the transferase hexapeptide repeat family. LpxD subfamily. Homotrimer.

It carries out the reaction a UDP-3-O-[(3R)-3-hydroxyacyl]-alpha-D-glucosamine + a (3R)-hydroxyacyl-[ACP] = a UDP-2-N,3-O-bis[(3R)-3-hydroxyacyl]-alpha-D-glucosamine + holo-[ACP] + H(+). The protein operates within bacterial outer membrane biogenesis; LPS lipid A biosynthesis. Its function is as follows. Catalyzes the N-acylation of UDP-3-O-acylglucosamine using 3-hydroxyacyl-ACP as the acyl donor. Is involved in the biosynthesis of lipid A, a phosphorylated glycolipid that anchors the lipopolysaccharide to the outer membrane of the cell. This chain is UDP-3-O-acylglucosamine N-acyltransferase, found in Caulobacter sp. (strain K31).